Here is a 468-residue protein sequence, read N- to C-terminus: UDP-N-acetylmuramate--L-alanine ligase (468 aa).

112–118 serves as a coordination point for ATP; it reads GMHGKTT.

It belongs to the MurCDEF family.

The protein localises to the cytoplasm. The catalysed reaction is UDP-N-acetyl-alpha-D-muramate + L-alanine + ATP = UDP-N-acetyl-alpha-D-muramoyl-L-alanine + ADP + phosphate + H(+). It functions in the pathway cell wall biogenesis; peptidoglycan biosynthesis. Cell wall formation. This Koribacter versatilis (strain Ellin345) protein is UDP-N-acetylmuramate--L-alanine ligase.